A 164-amino-acid chain; its full sequence is Zinc finger protein ZAT8 (164 aa).

2 consecutive C2H2-type zinc fingers follow at residues 37 to 59 and 85 to 107; these read FRCKTCLKEFSSFQALGGHRASH and HPCPICGVEFPMGQALGGHMRRH.

It localises to the nucleus. Functionally, probable transcription factor that may be involved in stress responses. This is Zinc finger protein ZAT8 (ZAT8) from Arabidopsis thaliana (Mouse-ear cress).